Reading from the N-terminus, the 233-residue chain is Phosducin-like protein C2A9.09 (233 aa).

Positions 58 to 212 (EDEEDDEFLQ…DIAALKDPQN (155 aa)) constitute a Phosducin domain. Positions 86–233 (FGSVYPISKP…VNDDLDDDFD (148 aa)) are thioredoxin fold. The segment at 207 to 233 (LKDPQNAEDELGKRDSSVNDDLDDDFD) is disordered. Phosphoserine occurs at positions 222 and 223. A compositionally biased stretch (acidic residues) spans 224–233 (VNDDLDDDFD).

It belongs to the phosducin family.

This is Phosducin-like protein C2A9.09 from Schizosaccharomyces pombe (strain 972 / ATCC 24843) (Fission yeast).